The following is a 145-amino-acid chain: MELALLCGLVVMAGVIPIQGGILNLNKMVKQVTGKMPILSYWPYGCHCGLGGRGQPKDATDWCCQTHDCCYDHLKTQGCSIYKDYYRYNFSQGNIHCSDKGSWCEQQLCACDKEVAFCLKRNLDTYQKRLRFYWRPHCRGQTPGC.

An N-terminal signal peptide occupies residues 1–20 (MELALLCGLVVMAGVIPIQG). 7 cysteine pairs are disulfide-bonded: C46–C138, C48–C64, C63–C118, C69–C145, C70–C111, C79–C104, and C97–C109. H47, G49, and G51 together coordinate Ca(2+). H67 is a catalytic residue. Residue D68 participates in Ca(2+) binding. N89 carries N-linked (GlcNAc...) asparagine glycosylation. The active site involves D112.

Belongs to the phospholipase A2 family. Ca(2+) is required as a cofactor. Highly expressed in pancreas and spleen and less abundantly in colon, thymus, placenta, small intestine, and prostate.

The protein resides in the secreted. It catalyses the reaction a 1,2-diacyl-sn-glycero-3-phosphoethanolamine + H2O = a 1-acyl-sn-glycero-3-phosphoethanolamine + a fatty acid + H(+). It carries out the reaction 1-hexadecanoyl-2-(9Z-octadecenoyl)-sn-glycero-3-phosphoethanolamine + H2O = 1-hexadecanoyl-sn-glycero-3-phosphoethanolamine + (9Z)-octadecenoate + H(+). The enzyme catalyses 1-hexadecanoyl-2-(9Z,12Z-octadecadienoyl)-sn-glycero-3-phosphoethanolamine + H2O = 1-hexadecanoyl-sn-glycero-3-phosphoethanolamine + (9Z,12Z)-octadecadienoate + H(+). The catalysed reaction is 1,2-dihexadecanoyl-sn-glycero-3-phospho-(1'-sn-glycerol) + H2O = 1-hexadecanoyl-sn-glycero-3-phospho-(1'-sn-glycerol) + hexadecanoate + H(+). It catalyses the reaction 1-hexadecanoyl-2-(9Z-octadecenoyl)-sn-glycero-3-phospho-(1'-sn-glycerol) + H2O = 1-hexadecanoyl-sn-glycero-3-phospho-(1'-sn-glycerol) + (9Z)-octadecenoate + H(+). It carries out the reaction a 1,2-diacyl-sn-glycero-3-phosphocholine + H2O = a 1-acyl-sn-glycero-3-phosphocholine + a fatty acid + H(+). The enzyme catalyses 1,2-dihexadecanoyl-sn-glycero-3-phosphocholine + H2O = 1-hexadecanoyl-sn-glycero-3-phosphocholine + hexadecanoate + H(+). The catalysed reaction is 1-hexadecanoyl-2-(9Z-octadecenoyl)-sn-glycero-3-phosphocholine + H2O = 1-hexadecanoyl-sn-glycero-3-phosphocholine + (9Z)-octadecenoate + H(+). It catalyses the reaction 1-hexadecanoyl-2-(9Z,12Z-octadecadienoyl)-sn-glycero-3-phosphocholine + H2O = (9Z,12Z)-octadecadienoate + 1-hexadecanoyl-sn-glycero-3-phosphocholine + H(+). It carries out the reaction 1-hexadecanoyl-2-(4Z,7Z,10Z,13Z,16Z,19Z-docosahexaenoyl)-sn-glycero-3-phosphocholine + H2O = (4Z,7Z,10Z,13Z,16Z,19Z)-docosahexaenoate + 1-hexadecanoyl-sn-glycero-3-phosphocholine + H(+). In terms of biological role, secretory calcium-dependent phospholipase A2 that primarily targets extracellular lipids, exerting anti-inflammatory and immunosuppressive functions. Hydrolyzes the ester bond of the fatty acyl group attached at sn-2 position of phospholipids (phospholipase A2 activity) with preference for phosphatidylethanolamines and phosphatidylglycerols over phosphatidylcholines. In draining lymph nodes, selectively hydrolyzes diacyl and alkenyl forms of phosphatidylethanolamines, releasing omega-3 polyunsaturated fatty acids (PUFAs) such as eicosapentaenoate and docosahexaenoate that are precursors of the anti-inflammatory lipid mediators, resolvins. During the resolution phase of acute inflammation drives docosahexaenoate-derived resolvin D1 synthesis, which suppresses dendritic cell activation and T-helper 1 immune response. May act in an autocrine and paracrine manner. Via a mechanism independent of its catalytic activity, promotes differentiation of regulatory T cells (Tregs) and participates in the maintenance of immune tolerance. May contribute to lipid remodeling of cellular membranes and generation of lipid mediators involved in pathogen clearance. Displays bactericidal activity against Gram-positive bacteria by directly hydrolyzing phospholipids of the bacterial membrane. The chain is Group IID secretory phospholipase A2 (PLA2G2D) from Homo sapiens (Human).